A 323-amino-acid chain; its full sequence is Glyoxylate/hydroxypyruvate reductase B (323 aa).

Residues R237 and E266 contribute to the active site. H285 serves as the catalytic Proton donor.

It belongs to the D-isomer specific 2-hydroxyacid dehydrogenase family. GhrB subfamily. As to quaternary structure, homodimer.

Its subcellular location is the cytoplasm. It carries out the reaction glycolate + NADP(+) = glyoxylate + NADPH + H(+). The enzyme catalyses (R)-glycerate + NAD(+) = 3-hydroxypyruvate + NADH + H(+). The catalysed reaction is (R)-glycerate + NADP(+) = 3-hydroxypyruvate + NADPH + H(+). Its function is as follows. Catalyzes the NADPH-dependent reduction of glyoxylate and hydroxypyruvate into glycolate and glycerate, respectively. In Klebsiella pneumoniae (strain 342), this protein is Glyoxylate/hydroxypyruvate reductase B.